The following is a 93-amino-acid chain: Small ribosomal subunit protein bS18 (93 aa).

The protein belongs to the bacterial ribosomal protein bS18 family. Part of the 30S ribosomal subunit. Forms a tight heterodimer with protein bS6.

Functionally, binds as a heterodimer with protein bS6 to the central domain of the 16S rRNA, where it helps stabilize the platform of the 30S subunit. This is Small ribosomal subunit protein bS18 from Verminephrobacter eiseniae (strain EF01-2).